The primary structure comprises 473 residues: ATP synthase subunit beta (473 aa).

158–165 contacts ATP; the sequence is GGAGVGKT.

The protein belongs to the ATPase alpha/beta chains family. As to quaternary structure, F-type ATPases have 2 components, CF(1) - the catalytic core - and CF(0) - the membrane proton channel. CF(1) has five subunits: alpha(3), beta(3), gamma(1), delta(1), epsilon(1). CF(0) has three main subunits: a(1), b(2) and c(9-12). The alpha and beta chains form an alternating ring which encloses part of the gamma chain. CF(1) is attached to CF(0) by a central stalk formed by the gamma and epsilon chains, while a peripheral stalk is formed by the delta and b chains.

Its subcellular location is the cell membrane. It catalyses the reaction ATP + H2O + 4 H(+)(in) = ADP + phosphate + 5 H(+)(out). Produces ATP from ADP in the presence of a proton gradient across the membrane. The catalytic sites are hosted primarily by the beta subunits. The polypeptide is ATP synthase subunit beta (Geobacillus thermoleovorans (Bacillus thermoleovorans)).